Consider the following 610-residue polypeptide: Glutamine--fructose-6-phosphate aminotransferase [isomerizing] (610 aa).

C2 (nucleophile; for GATase activity) is an active-site residue. The region spanning 2–218 (CGIVGAVAQR…EGDIAEITRR (217 aa)) is the Glutamine amidotransferase type-2 domain. SIS domains follow at residues 278-426 (IVDS…VKGH) and 459-600 (LAED…VDQP). K605 (for Fru-6P isomerization activity) is an active-site residue.

Homodimer.

It localises to the cytoplasm. It carries out the reaction D-fructose 6-phosphate + L-glutamine = D-glucosamine 6-phosphate + L-glutamate. Its function is as follows. Catalyzes the first step in hexosamine metabolism, converting fructose-6P into glucosamine-6P using glutamine as a nitrogen source. The polypeptide is Glutamine--fructose-6-phosphate aminotransferase [isomerizing] (Haemophilus influenzae (strain ATCC 51907 / DSM 11121 / KW20 / Rd)).